A 440-amino-acid chain; its full sequence is Sorting nexin-31 (440 aa).

The 109-residue stretch at 1–109 (MKMHFCIPVS…EFLKLAQLNT (109 aa)) folds into the PX domain.

Belongs to the sorting nexin family. Interacts with CCDC22, CCDC93, VPS26C and VPS35L, associates with the retriever and CCC complexes.

Functionally, may be involved in protein trafficking. This Homo sapiens (Human) protein is Sorting nexin-31 (SNX31).